We begin with the raw amino-acid sequence, 224 residues long: Putative O-methyltransferase MMAR_4217 (224 aa).

Polar residues predominate over residues 1–11; sequence MHGTDSSSDTP. Positions 1–20 are disordered; sequence MHGTDSSSDTPGQPAPSRAE. S-adenosyl-L-methionine-binding positions include Val-51, Glu-73, 75–76, Ser-81, Asp-99, and Ile-100; that span reads GT. Residue Asp-147 participates in substrate binding. Asp-149 lines the S-adenosyl-L-methionine pocket.

Belongs to the class I-like SAM-binding methyltransferase superfamily. Cation-dependent O-methyltransferase family.

This is Putative O-methyltransferase MMAR_4217 from Mycobacterium marinum (strain ATCC BAA-535 / M).